The following is a 102-amino-acid chain: Small ribosomal subunit protein uS10 (102 aa).

It belongs to the universal ribosomal protein uS10 family. In terms of assembly, part of the 30S ribosomal subunit.

In terms of biological role, involved in the binding of tRNA to the ribosomes. The sequence is that of Small ribosomal subunit protein uS10 from Bifidobacterium animalis subsp. lactis (strain AD011).